The primary structure comprises 89 residues: Small ribosomal subunit protein uS15 (89 aa).

The protein belongs to the universal ribosomal protein uS15 family. In terms of assembly, part of the 30S ribosomal subunit. Forms a bridge to the 50S subunit in the 70S ribosome, contacting the 23S rRNA.

Its function is as follows. One of the primary rRNA binding proteins, it binds directly to 16S rRNA where it helps nucleate assembly of the platform of the 30S subunit by binding and bridging several RNA helices of the 16S rRNA. In terms of biological role, forms an intersubunit bridge (bridge B4) with the 23S rRNA of the 50S subunit in the ribosome. This Shewanella halifaxensis (strain HAW-EB4) protein is Small ribosomal subunit protein uS15.